The sequence spans 487 residues: Protein nucleotidyltransferase YdiU (487 aa).

Positions 91, 93, 94, 114, 126, 127, 177, and 184 each coordinate ATP. Asp253 functions as the Proton acceptor in the catalytic mechanism. Mg(2+)-binding residues include Asn254 and Asp263. Asp263 serves as a coordination point for ATP.

It belongs to the SELO family. The cofactor is Mg(2+). Mn(2+) serves as cofactor.

It carries out the reaction L-seryl-[protein] + ATP = 3-O-(5'-adenylyl)-L-seryl-[protein] + diphosphate. The enzyme catalyses L-threonyl-[protein] + ATP = 3-O-(5'-adenylyl)-L-threonyl-[protein] + diphosphate. It catalyses the reaction L-tyrosyl-[protein] + ATP = O-(5'-adenylyl)-L-tyrosyl-[protein] + diphosphate. The catalysed reaction is L-histidyl-[protein] + UTP = N(tele)-(5'-uridylyl)-L-histidyl-[protein] + diphosphate. It carries out the reaction L-seryl-[protein] + UTP = O-(5'-uridylyl)-L-seryl-[protein] + diphosphate. The enzyme catalyses L-tyrosyl-[protein] + UTP = O-(5'-uridylyl)-L-tyrosyl-[protein] + diphosphate. Functionally, nucleotidyltransferase involved in the post-translational modification of proteins. It can catalyze the addition of adenosine monophosphate (AMP) or uridine monophosphate (UMP) to a protein, resulting in modifications known as AMPylation and UMPylation. This Yersinia pestis (strain Pestoides F) protein is Protein nucleotidyltransferase YdiU.